Here is a 919-residue protein sequence, read N- to C-terminus: Probable dipeptidyl-aminopeptidase B (919 aa).

Residues 1-89 (MGANSRVNDD…DGYVPSGGKP (89 aa)) are disordered. Residues 1–95 (MGANSRVNDD…GGKPAQRRTR (95 aa)) lie on the Cytoplasmic side of the membrane. The segment covering 27–38 (DSSSTASISLTL) has biased composition (low complexity). Over residues 44 to 55 (HTATEPSKSTNG) the composition is skewed to polar residues. Residues 96-116 (IVFWLLVALCVGGWAMAFIIM) form a helical; Signal-anchor for type II membrane protein membrane-spanning segment. The Vacuolar portion of the chain corresponds to 117-919 (ATSPNNRHST…RVIRRLLHFG (803 aa)). A disordered region spans residues 121–150 (NNRHSTSDSSSGGSESEIVKPNTPHDGKKI). The segment covering 127-136 (SDSSSGGSES) has biased composition (low complexity). N-linked (GlcNAc...) asparagine glycosylation is found at Asn207, Asn303, Asn355, Asn577, and Asn665. The Charge relay system role is filled by Ser760. Asn814 and Asn819 each carry an N-linked (GlcNAc...) asparagine glycan. Catalysis depends on charge relay system residues Asp837 and His870.

Belongs to the peptidase S9B family.

The protein resides in the vacuole membrane. It carries out the reaction Release of an N-terminal dipeptide, Xaa-Yaa-|-Zaa-, from a polypeptide, preferentially when Yaa is Pro, provided Zaa is neither Pro nor hydroxyproline.. Functionally, type IV dipeptidyl-peptidase which removes N-terminal dipeptides sequentially from polypeptides having unsubstituted N-termini provided that the penultimate residue is proline. This Arthroderma otae (strain ATCC MYA-4605 / CBS 113480) (Microsporum canis) protein is Probable dipeptidyl-aminopeptidase B (DAPB).